Reading from the N-terminus, the 341-residue chain is Ribosomal RNA small subunit methyltransferase C (341 aa).

The protein belongs to the methyltransferase superfamily. RsmC family. Monomer.

The protein localises to the cytoplasm. The catalysed reaction is guanosine(1207) in 16S rRNA + S-adenosyl-L-methionine = N(2)-methylguanosine(1207) in 16S rRNA + S-adenosyl-L-homocysteine + H(+). Specifically methylates the guanine in position 1207 of 16S rRNA in the 30S particle. The protein is Ribosomal RNA small subunit methyltransferase C of Pseudoalteromonas translucida (strain TAC 125).